Here is a 459-residue protein sequence, read N- to C-terminus: Argininosuccinate lyase (459 aa).

This sequence belongs to the lyase 1 family. Argininosuccinate lyase subfamily.

The protein localises to the cytoplasm. It catalyses the reaction 2-(N(omega)-L-arginino)succinate = fumarate + L-arginine. Its pathway is amino-acid biosynthesis; L-arginine biosynthesis; L-arginine from L-ornithine and carbamoyl phosphate: step 3/3. This chain is Argininosuccinate lyase, found in Geobacillus kaustophilus (strain HTA426).